The primary structure comprises 187 residues: Ribosome-recycling factor (187 aa).

This sequence belongs to the RRF family.

Its subcellular location is the cytoplasm. Responsible for the release of ribosomes from messenger RNA at the termination of protein biosynthesis. May increase the efficiency of translation by recycling ribosomes from one round of translation to another. This is Ribosome-recycling factor from Paracoccus zeaxanthinifaciens.